Reading from the N-terminus, the 113-residue chain is Signal peptidase complex subunit 1 (113 aa).

The Cytoplasmic portion of the chain corresponds to 1 to 32 (MDGMIAMLPAPLQQLSSHIDFQGQKVAERTYQ). A helical transmembrane segment spans residues 33–53 (VILTLAGIIGFFVGYSTQQLS). Topologically, residues 54–57 (YAMY) are lumenal. Residues 58 to 78 (TVMGAAVFTALIILPPWPFLF) traverse the membrane as a helical segment. Residues 79-113 (RKNPIVWQTPIEEQEASSSSDNEKKDKKKETKKTK) lie on the Cytoplasmic side of the membrane. Residues 89-113 (IEEQEASSSSDNEKKDKKKETKKTK) are disordered.

It belongs to the SPCS1 family. As to quaternary structure, component of the signal peptidase complex (SPC) composed of a catalytic subunit sec-11 and three accessory subunits spcs-1, spcs-2 and spcs-3. The complex induces a local thinning of the ER membrane which is used to measure the length of the signal peptide (SP) h-region of protein substrates. This ensures the selectivity of the complex towards h-regions shorter than 18-20 amino acids.

It localises to the endoplasmic reticulum membrane. Its function is as follows. Component of the signal peptidase complex (SPC) which catalyzes the cleavage of N-terminal signal sequences from nascent proteins as they are translocated into the lumen of the endoplasmic reticulum. Dispensable for SPC enzymatic activity. This Caenorhabditis briggsae protein is Signal peptidase complex subunit 1.